We begin with the raw amino-acid sequence, 343 residues long: Sodium/bile acid cotransporter 7 (343 aa).

Over 1–10 (MGLLERLRKE) the chain is Cytoplasmic. The chain crosses the membrane as a helical span at residues 11 to 31 (WFIVGIILVIAAAKLEPTIGG). Topologically, residues 32–37 (KGGPLK) are extracellular. The chain crosses the membrane as a helical span at residues 38 to 58 (PEITITYIAVSAIFFNSGLSL). Residues 59 to 71 (KTEELTNALMHVK) lie on the Cytoplasmic side of the membrane. Residues 72 to 92 (LHLFVQLFTLVFFPTAIWVFL) form a helical membrane-spanning segment. Topologically, residues 93–116 (QVLSLTPINEWLLKGLQTVSCMPP) are extracellular. A helical membrane pass occupies residues 117–137 (PVSSAVILTKAVGGNEAAAIF). Position 138 (Asn138) is a topological domain, cytoplasmic. The chain crosses the membrane as a helical span at residues 139 to 159 (SAFGSFLGIVVTPLLLLLFLG). Over 160–163 (SSSS) the chain is Extracellular. Residues 164–184 (VPFTSIFSQLFMTVVVPLIIG) traverse the membrane as a helical segment. At 185 to 201 (QIVRRYIKDWLERKKPP) the chain is on the cytoplasmic side. A helical transmembrane segment spans residues 202–222 (FGAISSCVLLMIIYTTFCDTF). The Extracellular segment spans residues 223–234 (SNPNIDLDTFSL). The helical transmembrane segment at 235-255 (VIIVFIIFFIQLAFMLLTFLF) threads the bilayer. Over 256–270 (STSKNTGFTPADTVA) the chain is Cytoplasmic. Residues 271–291 (IVFCSTHKSLTLGIPMLKIVF) traverse the membrane as a helical segment. At 292–298 (AGYEHLS) the chain is on the extracellular side. A helical membrane pass occupies residues 299–319 (LISVPLLIYHPAQILLGSVLV). Over 320 to 343 (PTIKSWMLSRQKALKLTRQPKVPL) the chain is Cytoplasmic.

The protein belongs to the bile acid:sodium symporter (BASS) (TC 2.A.28) family.

The protein resides in the cell membrane. It localises to the endoplasmic reticulum membrane. It is found in the golgi apparatus membrane. Its function is as follows. Involved in teeth and skeletal development. Has an essential role in the biosynthesis and trafficking of glycosaminoglycans and glycoproteins to produce a proper functioning extracellular matrix. Required for extracellular matrix mineralization. Also involved in the regulation of cellular calcium homeostasis. Does not show transport activity towards bile acids or steroid sulfates. This is Sodium/bile acid cotransporter 7 (slc10a7) from Xenopus tropicalis (Western clawed frog).